The chain runs to 180 residues: MATRLKEKYTSEIVPSLMSKFNYTSIMQVPKVEKIIINMGVGEAVANAKSLDTAIEDLQIIAGQKPVVTKAKKSIAGFKLREGMPIGAKVTLRGERMYHFLDKLMNVSLPRVRDFRGISSKAFDGRGNYTLGLKEQLIFPEIEYDKIDKVRGMDIVVVTSAKTDEEARELLTQMGMPFRK.

This sequence belongs to the universal ribosomal protein uL5 family. In terms of assembly, part of the 50S ribosomal subunit; part of the 5S rRNA/L5/L18/L25 subcomplex. Contacts the 5S rRNA and the P site tRNA. Forms a bridge to the 30S subunit in the 70S ribosome.

Its function is as follows. This is one of the proteins that bind and probably mediate the attachment of the 5S RNA into the large ribosomal subunit, where it forms part of the central protuberance. In the 70S ribosome it contacts protein S13 of the 30S subunit (bridge B1b), connecting the 2 subunits; this bridge is implicated in subunit movement. Contacts the P site tRNA; the 5S rRNA and some of its associated proteins might help stabilize positioning of ribosome-bound tRNAs. The polypeptide is Large ribosomal subunit protein uL5 (Brevibacillus brevis (strain 47 / JCM 6285 / NBRC 100599)).